The following is a 481-amino-acid chain: Palmitoyltransferase PFA4 (481 aa).

Residues 1-22 (MTNQDPDDGAYPSSQSDDDGIE) are disordered. Topologically, residues 1 to 66 (MTNQDPDDGA…APLTGRRRTP (66 aa)) are cytoplasmic. The chain crosses the membrane as a helical span at residues 67 to 87 (LSWTEVIWVSLTLLLIAVLGY). At 88-108 (SSQLYVMLPYYEKTPSFSPQA) the chain is on the lumenal side. The helical transmembrane segment at 109-129 (LAAVLVPFNLGLLAIYYNYWL) threads the bilayer. The Cytoplasmic segment spans residues 130–223 (CVTTDAGSVP…LANCVGHFNH (94 aa)). A DHHC domain is found at 181–231 (RYCKTCSAFKPPRSHHCKTCQRCVLRMDHHCPWLANCVGHFNHAHFIRFLF). The active-site S-palmitoyl cysteine intermediate is the Cys-211. Residues 224–244 (AHFIRFLFYVDVTCLYHLIMI) form a helical membrane-spanning segment. Residues 245-265 (SCRVLDSFNSYTYWREPCARE) lie on the Lumenal side of the membrane. The helical transmembrane segment at 266–286 (LVWLVVNYALCIPVILLVGIF) threads the bilayer. Over 287–481 (SLYHFYCLAV…EVRPHTPWSV (195 aa)) the chain is Cytoplasmic. A disordered region spans residues 370–481 (SQYRWPPKDP…EVRPHTPWSV (112 aa)). Residues 418-431 (SSPSSSDSHSSLHL) show a composition bias toward low complexity. 2 stretches are compositionally biased toward basic and acidic residues: residues 441–452 (LPHHFDPPHDPD) and 466–475 (RGSEGYEVRP).

The protein belongs to the DHHC palmitoyltransferase family. PFA4 subfamily.

It is found in the endoplasmic reticulum membrane. It catalyses the reaction L-cysteinyl-[protein] + hexadecanoyl-CoA = S-hexadecanoyl-L-cysteinyl-[protein] + CoA. Functionally, mediates the reversible addition of palmitate to target proteins, thereby regulating their membrane association and biological function. The chain is Palmitoyltransferase PFA4 from Mycosarcoma maydis (Corn smut fungus).